Consider the following 185-residue polypeptide: Ribosome-recycling factor (185 aa).

This sequence belongs to the RRF family.

The protein resides in the cytoplasm. Its function is as follows. Responsible for the release of ribosomes from messenger RNA at the termination of protein biosynthesis. May increase the efficiency of translation by recycling ribosomes from one round of translation to another. The sequence is that of Ribosome-recycling factor from Corynebacterium glutamicum (strain ATCC 13032 / DSM 20300 / JCM 1318 / BCRC 11384 / CCUG 27702 / LMG 3730 / NBRC 12168 / NCIMB 10025 / NRRL B-2784 / 534).